Here is a 324-residue protein sequence, read N- to C-terminus: Mevalonate-3-kinase (324 aa).

Leu-19 provides a ligand contact to substrate. Position 109–112 (109–112 (SGSS)) interacts with ATP. Substrate contacts are provided by Glu-145 and Arg-149. The ATP site is built by Arg-190 and Ser-193.

It belongs to the GHMP kinase family. As to quaternary structure, homodimer.

The catalysed reaction is (R)-mevalonate + ATP = (R)-3-phosphomevalonate + ADP + H(+). It functions in the pathway isoprenoid biosynthesis; isopentenyl diphosphate biosynthesis via mevalonate pathway. Catalyzes the phosphorylation of mevalonate (MVA) to yield mevalonate-3-phosphate. Functions in an alternative mevalonate pathway, which passes through mevalonate 3-phosphate rather than mevalonate 5-phosphate. Also able to catalyze the formation of isobutene via the conversion of 3-hydroxyisovalerate (3-HIV) to an unstable 3-phosphate intermediate that undergoes a spontaneous decarboxylation. The sequence is that of Mevalonate-3-kinase from Picrophilus torridus (strain ATCC 700027 / DSM 9790 / JCM 10055 / NBRC 100828 / KAW 2/3).